The sequence spans 396 residues: Phosphoglycerate kinase (396 aa).

Residues 21–23 (DFN), Arg-36, 59–62 (HLGK), Arg-119, and Arg-156 each bind substrate. ATP contacts are provided by residues Lys-206, Gly-294, Glu-325, and 352 to 355 (GGDS).

The protein belongs to the phosphoglycerate kinase family. In terms of assembly, monomer.

Its subcellular location is the cytoplasm. It carries out the reaction (2R)-3-phosphoglycerate + ATP = (2R)-3-phospho-glyceroyl phosphate + ADP. Its pathway is carbohydrate degradation; glycolysis; pyruvate from D-glyceraldehyde 3-phosphate: step 2/5. This is Phosphoglycerate kinase from Listeria monocytogenes serovar 1/2a (strain ATCC BAA-679 / EGD-e).